A 197-amino-acid polypeptide reads, in one-letter code: Na(+)-translocating NADH-quinone reductase subunit E (197 aa).

Transmembrane regions (helical) follow at residues 11–31 (SVFI…FLAV), 35–55 (VSTA…SVPA), 76–96 (FLKF…LEMF), 108–128 (LGIY…VSFM), 139–159 (VVYG…LAGI), and 175–195 (LGIT…FSGI).

This sequence belongs to the NqrDE/RnfAE family. Composed of six subunits; NqrA, NqrB, NqrC, NqrD, NqrE and NqrF.

Its subcellular location is the cell inner membrane. It carries out the reaction a ubiquinone + n Na(+)(in) + NADH + H(+) = a ubiquinol + n Na(+)(out) + NAD(+). NQR complex catalyzes the reduction of ubiquinone-1 to ubiquinol by two successive reactions, coupled with the transport of Na(+) ions from the cytoplasm to the periplasm. NqrA to NqrE are probably involved in the second step, the conversion of ubisemiquinone to ubiquinol. The chain is Na(+)-translocating NADH-quinone reductase subunit E from Neisseria gonorrhoeae (strain ATCC 700825 / FA 1090).